Consider the following 367-residue polypeptide: GTP cyclohydrolase FolE2 (367 aa).

Belongs to the GTP cyclohydrolase IV family.

The catalysed reaction is GTP + H2O = 7,8-dihydroneopterin 3'-triphosphate + formate + H(+). It participates in cofactor biosynthesis; 7,8-dihydroneopterin triphosphate biosynthesis; 7,8-dihydroneopterin triphosphate from GTP: step 1/1. Functionally, converts GTP to 7,8-dihydroneopterin triphosphate. This is GTP cyclohydrolase FolE2 from Ruegeria sp. (strain TM1040) (Silicibacter sp.).